Reading from the N-terminus, the 309-residue chain is Homoserine kinase (309 aa).

91-101 (PIGSGLGSSAC) lines the ATP pocket.

The protein belongs to the GHMP kinase family. Homoserine kinase subfamily.

The protein resides in the cytoplasm. It catalyses the reaction L-homoserine + ATP = O-phospho-L-homoserine + ADP + H(+). It functions in the pathway amino-acid biosynthesis; L-threonine biosynthesis; L-threonine from L-aspartate: step 4/5. In terms of biological role, catalyzes the ATP-dependent phosphorylation of L-homoserine to L-homoserine phosphate. This Pectobacterium carotovorum subsp. carotovorum (strain PC1) protein is Homoserine kinase.